The following is a 702-amino-acid chain: Mesothelin-like protein (702 aa).

The first 35 residues, 1 to 35 (MAAAVTIPGPRIGALQSSGLTLLLSLAAHCSGPQA), serve as a signal peptide directing secretion. Residues 36–638 (KVLSPGGLDA…AQASTSGSLW (603 aa)) are Extracellular-facing. 3 N-linked (GlcNAc...) asparagine glycosylation sites follow: asparagine 122, asparagine 307, and asparagine 424. Residues 588-611 (QLGLDASPTSPTGPAHGTRGPPST) form a disordered region. The helical transmembrane segment at 639–668 (APLGYLPLAMALPCSLLCLLHWGTCILVSV) threads the bilayer. Residues 669 to 702 (DSVASGWLGSQGSGAGKTEVLDSAGRPLGLTGQL) lie on the Cytoplasmic side of the membrane.

This sequence belongs to the mesothelin family.

It localises to the membrane. Its function is as follows. May play a role in cellular adhesion. In Homo sapiens (Human), this protein is Mesothelin-like protein (MSLNL).